Reading from the N-terminus, the 317-residue chain is Acetyl-coenzyme A carboxylase carboxyl transferase subunit alpha (317 aa).

Residues 33 to 294 (NLDDEIARLQ…KQRLLEDLAD (262 aa)) form the CoA carboxyltransferase C-terminal domain.

It belongs to the AccA family. As to quaternary structure, acetyl-CoA carboxylase is a heterohexamer composed of biotin carboxyl carrier protein (AccB), biotin carboxylase (AccC) and two subunits each of ACCase subunit alpha (AccA) and ACCase subunit beta (AccD).

It is found in the cytoplasm. It carries out the reaction N(6)-carboxybiotinyl-L-lysyl-[protein] + acetyl-CoA = N(6)-biotinyl-L-lysyl-[protein] + malonyl-CoA. Its pathway is lipid metabolism; malonyl-CoA biosynthesis; malonyl-CoA from acetyl-CoA: step 1/1. Its function is as follows. Component of the acetyl coenzyme A carboxylase (ACC) complex. First, biotin carboxylase catalyzes the carboxylation of biotin on its carrier protein (BCCP) and then the CO(2) group is transferred by the carboxyltransferase to acetyl-CoA to form malonyl-CoA. This Glaesserella parasuis serovar 5 (strain SH0165) (Haemophilus parasuis) protein is Acetyl-coenzyme A carboxylase carboxyl transferase subunit alpha.